A 183-amino-acid polypeptide reads, in one-letter code: Potassium-transporting ATPase KdpC subunit (183 aa).

Residues 10–30 (LTVFTLILFAVIYPLAIYGIA) form a helical membrane-spanning segment.

The protein belongs to the KdpC family. As to quaternary structure, the system is composed of three essential subunits: KdpA, KdpB and KdpC.

It localises to the cell inner membrane. Its function is as follows. Part of the high-affinity ATP-driven potassium transport (or Kdp) system, which catalyzes the hydrolysis of ATP coupled with the electrogenic transport of potassium into the cytoplasm. This subunit acts as a catalytic chaperone that increases the ATP-binding affinity of the ATP-hydrolyzing subunit KdpB by the formation of a transient KdpB/KdpC/ATP ternary complex. The protein is Potassium-transporting ATPase KdpC subunit of Flavobacterium johnsoniae (strain ATCC 17061 / DSM 2064 / JCM 8514 / BCRC 14874 / CCUG 350202 / NBRC 14942 / NCIMB 11054 / UW101) (Cytophaga johnsonae).